A 339-amino-acid chain; its full sequence is MVDPIVTKNWRDLIKPRGLVVDQESLSNTYGKFVAEPLERGFGITLGNSLRRVLLSSLQGAAITSVKIEGVEHEFMTIPEVAEDVTDIILNLKEVLLQIHTNEVKTLRIEADGPREIKAGDIIADGQVEILNPGHHILTISEGGRVRMEMTARRGRGYVPADKNKVPGQPIGTIPIDALFSPIRKVNYQVTNARVGQQTDYDKLSLEVWTDGSVAPNDAVAYAAKIVKEQLSIFINFDEAEEPAEEVKPVEEQKLNENLFRSVDELELSVRSANCLQNANIKTIGDLVQKTEAEMLKTKNFGRKSLKEIKEILAEMGLSLGMKLENWPPKAAPQGAPKV.

Residues 1–238 form an alpha N-terminal domain (alpha-NTD) region; that stretch reads MVDPIVTKNW…EQLSIFINFD (238 aa). Positions 255-339 are alpha C-terminal domain (alpha-CTD); it reads LNENLFRSVD…KAAPQGAPKV (85 aa).

It belongs to the RNA polymerase alpha chain family. Homodimer. The RNAP catalytic core consists of 2 alpha, 1 beta, 1 beta' and 1 omega subunit. When a sigma factor is associated with the core the holoenzyme is formed, which can initiate transcription.

It catalyses the reaction RNA(n) + a ribonucleoside 5'-triphosphate = RNA(n+1) + diphosphate. In terms of biological role, DNA-dependent RNA polymerase catalyzes the transcription of DNA into RNA using the four ribonucleoside triphosphates as substrates. In Anaeromyxobacter sp. (strain Fw109-5), this protein is DNA-directed RNA polymerase subunit alpha.